The following is a 90-amino-acid chain: UPF0367 protein P9301_01411 (90 aa).

It belongs to the UPF0367 family.

The polypeptide is UPF0367 protein P9301_01411 (Prochlorococcus marinus (strain MIT 9301)).